The primary structure comprises 456 residues: Nuclear distribution protein PAC1 (456 aa).

The 33-residue stretch at 9 to 41 (QADELHKSIIAYLSANDLPNTAAALRAELNLTE) folds into the LisH domain. Residues 61 to 88 (TSIVRLQKKIMDLEARNAALQSELDNLT) are a coiled coil. WD repeat units lie at residues 114–153 (SHRD…LEMT), 156–197 (GHTR…KNVR), 201–240 (GHDH…CVRS), 243–282 (GHTG…NPEN), 288–348 (GHEH…LMTL), 350–389 (GHDN…KCVK), 394–437 (AHDR…PDVQ), and 439–456 (RCVI…IFAA).

Belongs to the WD repeat LIS1/nudF family. As to quaternary structure, self-associates. Interacts with NDL1 and dynein.

It is found in the cytoplasm. It localises to the cytoskeleton. Its subcellular location is the spindle pole. In terms of biological role, positively regulates the activity of the minus-end directed microtubule motor protein dynein. May enhance dynein-mediated microtubule sliding by targeting dynein to the microtubule plus end. Required for nuclear migration during vegetative growth as well as development. Required for retrograde early endosome (EE) transport from the hyphal tip. Required for localization of dynein to the mitotic spindle poles. Recruits additional proteins to the dynein complex at SPBs. The polypeptide is Nuclear distribution protein PAC1 (Ajellomyces capsulatus (strain H143) (Darling's disease fungus)).